The sequence spans 609 residues: Numb-like protein (609 aa).

Disordered stretches follow at residues 1–68 (MSRS…QWQA), 223–283 (GSFR…PVAA), 372–421 (ASAG…EEVS), 434–464 (QQQQQQQQQQQQQAASVAPVPTMPPALQPFP), and 537–609 (AGAF…EIEL). The span at 19–29 (PPAPCGAPGPP) shows a compositional bias: pro residues. Residues 74–223 (RKGTCSFPVR…ASRTSFAREG (150 aa)) form the PID domain. Residues Ser-224 and Ser-228 each carry the phosphoserine modification. The segment covering 233 to 245 (PAEREAPDKKKAE) has biased composition (basic and acidic residues). Low complexity predominate over residues 246–259 (AAAAPTVAPGPAQP). Residue Ser-263 is modified to Phosphoserine. Thr-279 bears the Phosphothreonine mark. Residues 409–418 (TPSEAERWLE) show a composition bias toward basic and acidic residues. Ser-411 bears the Phosphoserine mark. Positions 434-446 (QQQQQQQQQQQQQ) are enriched in low complexity. 2 stretches are compositionally biased toward pro residues: residues 454 to 464 (PTMPPALQPFP) and 558 to 573 (NGAPWPPEPAPAPAPE).

In terms of assembly, interacts (via PTB domain) with MAP3K7IP2 (via C-terminal). Interacts (via C-terminal) with TRAF6 (via TRAF domains). Associates with EPS15 and NOTCH1.

The protein localises to the cytoplasm. Plays a role in the process of neurogenesis. Required throughout embryonic neurogenesis to maintain neural progenitor cells, also called radial glial cells (RGCs), by allowing their daughter cells to choose progenitor over neuronal cell fate. Not required for the proliferation of neural progenitor cells before the onset of embryonic neurogenesis. Also required postnatally in the subventricular zone (SVZ) neurogenesis by regulating SVZ neuroblasts survival and ependymal wall integrity. Negative regulator of NF-kappa-B signaling pathway. The inhibition of NF-kappa-B activation is mediated at least in part, by preventing MAP3K7IP2 to interact with polyubiquitin chains of TRAF6 and RIPK1 and by stimulating the 'Lys-48'-linked polyubiquitination and degradation of TRAF6 in cortical neurons. The protein is Numb-like protein (NUMBL) of Homo sapiens (Human).